A 572-amino-acid chain; its full sequence is Cuticlin-6 (572 aa).

Positions 1–24 are cleaved as a signal peptide; the sequence is MRPIPYDISLSITSFLSLILICSA. Residues 25–541 are Extracellular-facing; it reads NPIDNGLVDS…PLPYPLINTN (517 aa). A VWFA domain is found at 47-216; the sequence is EVILLLDASG…QLDRALADSL (170 aa). A glycan (N-linked (GlcNAc...) asparagine) is linked at Asn-78. The region spanning 233–479 is the ZP domain; sequence ICGPDRIGVK…GGCEGITPPQ (247 aa). Residues 542-562 traverse the membrane as a helical segment; sequence LWIMGIITLTNIFVFILTVWF. The Cytoplasmic portion of the chain corresponds to 563 to 572; that stretch reads TFRKRRCKPA.

The protein resides in the cell membrane. In terms of biological role, plays a role in alae formation in dauer larvae probably by regulating cuticle assembly. This Caenorhabditis elegans protein is Cuticlin-6.